We begin with the raw amino-acid sequence, 416 residues long: Enterobactin exporter EntS (416 aa).

The Cytoplasmic segment spans residues 1–21; it reads MNKQSWLLNLSLLKTHPAFRA. Residues 22–42 form a helical membrane-spanning segment; that stretch reads VFLARFISIVSLGLLGVAVPV. Over 43-55 the chain is Periplasmic; that stretch reads QIQMMTHSTWLVG. The chain crosses the membrane as a helical span at residues 56–76; it reads LSVTLTGGAMFVGLMVGGVLA. Over 77-83 the chain is Cytoplasmic; the sequence is DRYERKK. The chain crosses the membrane as a helical span at residues 84-104; it reads VILLARGTCGIGFIGLCLNAL. Residues 105–109 lie on the Periplasmic side of the membrane; sequence LPEPS. A helical membrane pass occupies residues 110–130; that stretch reads LLAIYLLGLWDGFFASLGVTA. Residues 131–156 lie on the Cytoplasmic side of the membrane; the sequence is LLAATPALVGRENLMQAGAITMLTVR. A helical membrane pass occupies residues 157 to 177; sequence LGSVISPMIGGLLLATGGVAW. Residue asparagine 178 is a topological domain, periplasmic. A helical membrane pass occupies residues 179-199; it reads YGLAAAGTFITLLPLLSLPAL. Over 200 to 218 the chain is Cytoplasmic; that stretch reads PPPPQPREHPLKSLLAGFR. A helical transmembrane segment spans residues 219–239; sequence FLLASPLVGGIALLGGLLTMA. Over 240 to 256 the chain is Periplasmic; it reads SAVRVLYPALADNWQMS. Residues 257-277 form a helical membrane-spanning segment; it reads AAEIGFLYAAIPLGAAIGALT. Residues 278 to 287 lie on the Cytoplasmic side of the membrane; that stretch reads SGKLAHSARP. A helical membrane pass occupies residues 288 to 307; the sequence is GLLMLLSTLGSFLAIGLFGL. The Periplasmic segment spans residues 308-313; it reads MPMWIL. The chain crosses the membrane as a helical span at residues 314 to 336; that stretch reads GVVCLALFGWLSAVSSLLQYTML. Residues 337-356 lie on the Cytoplasmic side of the membrane; it reads QTQTPEAMLGRINGLWTAQN. A helical transmembrane segment spans residues 357–377; sequence VTGDAIGAALLGGLGAMMTPV. Alanine 378 is a topological domain (periplasmic). The helical transmembrane segment at 379–399 threads the bilayer; it reads SASASGFGLLIIGVLLLLVLV. Over 400–416 the chain is Cytoplasmic; it reads ELRRFRQTPPQVTASDS.

Belongs to the major facilitator superfamily. EntS (TC 2.A.1.38) family.

It is found in the cell inner membrane. Component of an export pathway for enterobactin. This chain is Enterobactin exporter EntS, found in Shigella boydii serotype 4 (strain Sb227).